A 160-amino-acid polypeptide reads, in one-letter code: Transcriptional repressor NrdR (160 aa).

The span at 1–11 (MRCPSCNSLDT) shows a compositional bias: polar residues. Residues 1 to 20 (MRCPSCNSLDTQVKDSRPTE) form a disordered region. The segment at 3-34 (CPSCNSLDTQVKDSRPTEDSAVIRRRRVCMAC) is a zinc-finger region. In terms of domain architecture, ATP-cone spans 49 to 139 (LTVIKRNGRR…VYRNFREAKD (91 aa)).

This sequence belongs to the NrdR family. It depends on Zn(2+) as a cofactor.

Functionally, negatively regulates transcription of bacterial ribonucleotide reductase nrd genes and operons by binding to NrdR-boxes. The polypeptide is Transcriptional repressor NrdR (Nitrobacter hamburgensis (strain DSM 10229 / NCIMB 13809 / X14)).